A 483-amino-acid chain; its full sequence is MRDGEQTPGVALTKEKKLLIARALDEMKINVIEAGSAITSAGERESVRAVANAGLSAEICSYCRIVKTDVDHALECDVDSIHLVVPVSDLHIRTKIKKDRDTVRQIAADVTEYAKEHGLIVELSGEDSSRADLGFLKAVYSDGIDAGADRLCFCDTVGLLVPEKTTEIFRDLSSSLKAPISIHCHNDFGLATANTVAALAAGAKQAHVTINGLGERAGNASLEEVVMCLEWLYKYDTGIKHEQIYRTSRLVSRLTGIPVSPNKALVGGNAFTHEAGIHVHGLLADKATYEPMSPEYIGRQRQIVLGKHAGRSSITLALKEMGLEADDAQTEEIFNRVKQMGDQGKHVTDADLQIIAETVLDIYKEPLVKLEEFTIVSGNRVTPTASIKLNVKDKEIVQAGIGNGPVDAVINAIRRAVSSCAEDVILEEYHVDAVTGGTDALVEVRVKLSKEGKSITASGARTDIIMASVEAVMNGLNRLVRAE.

The Pyruvate carboxyltransferase domain maps to M1 to Y245.

Belongs to the alpha-IPM synthase/homocitrate synthase family. In terms of assembly, homodimer.

It catalyses the reaction pyruvate + acetyl-CoA + H2O = (3R)-citramalate + CoA + H(+). It functions in the pathway amino-acid biosynthesis; L-isoleucine biosynthesis; 2-oxobutanoate from pyruvate: step 1/3. Functionally, catalyzes the condensation of pyruvate and acetyl-coenzyme A to form (R)-citramalate. This is Putative (R)-citramalate synthase CimA from Methanosarcina mazei (strain ATCC BAA-159 / DSM 3647 / Goe1 / Go1 / JCM 11833 / OCM 88) (Methanosarcina frisia).